The chain runs to 131 residues: Small ribosomal subunit protein uS8 (131 aa).

This sequence belongs to the universal ribosomal protein uS8 family. In terms of assembly, part of the 30S ribosomal subunit. Contacts proteins S5 and S12.

In terms of biological role, one of the primary rRNA binding proteins, it binds directly to 16S rRNA central domain where it helps coordinate assembly of the platform of the 30S subunit. The polypeptide is Small ribosomal subunit protein uS8 (Prosthecochloris aestuarii (strain DSM 271 / SK 413)).